The chain runs to 141 residues: Large ribosomal subunit protein uL22 (141 aa).

A disordered region spans residues 108-141 (KSEEKKTVAKKTTTTKAPAKKTTSTKKATVKKES). Residues 117 to 134 (KKTTTTKAPAKKTTSTKK) show a composition bias toward low complexity.

The protein belongs to the universal ribosomal protein uL22 family. In terms of assembly, part of the 50S ribosomal subunit.

Functionally, this protein binds specifically to 23S rRNA; its binding is stimulated by other ribosomal proteins, e.g. L4, L17, and L20. It is important during the early stages of 50S assembly. It makes multiple contacts with different domains of the 23S rRNA in the assembled 50S subunit and ribosome. In terms of biological role, the globular domain of the protein is located near the polypeptide exit tunnel on the outside of the subunit, while an extended beta-hairpin is found that lines the wall of the exit tunnel in the center of the 70S ribosome. The protein is Large ribosomal subunit protein uL22 of Campylobacter jejuni subsp. jejuni serotype O:2 (strain ATCC 700819 / NCTC 11168).